We begin with the raw amino-acid sequence, 359 residues long: N-acetyl-gamma-glutamyl-phosphate reductase (359 aa).

Residue Cys162 is part of the active site.

This sequence belongs to the NAGSA dehydrogenase family. Type 1 subfamily.

Its subcellular location is the cytoplasm. The enzyme catalyses N-acetyl-L-glutamate 5-semialdehyde + phosphate + NADP(+) = N-acetyl-L-glutamyl 5-phosphate + NADPH + H(+). It participates in amino-acid biosynthesis; L-arginine biosynthesis; N(2)-acetyl-L-ornithine from L-glutamate: step 3/4. Functionally, catalyzes the NADPH-dependent reduction of N-acetyl-5-glutamyl phosphate to yield N-acetyl-L-glutamate 5-semialdehyde. In Prochlorococcus marinus (strain NATL2A), this protein is N-acetyl-gamma-glutamyl-phosphate reductase.